We begin with the raw amino-acid sequence, 88 residues long: Small ribosomal subunit protein bS20 (88 aa).

The span at 1 to 21 shows a compositional bias: basic residues; that stretch reads MANSKSAKKRALQSEKRRQHN. Positions 1 to 26 are disordered; the sequence is MANSKSAKKRALQSEKRRQHNASRSS.

Belongs to the bacterial ribosomal protein bS20 family.

Its function is as follows. Binds directly to 16S ribosomal RNA. The protein is Small ribosomal subunit protein bS20 of Shewanella halifaxensis (strain HAW-EB4).